The following is a 335-amino-acid chain: Urokinase plasminogen activator surface receptor (335 aa).

An N-terminal signal peptide occupies residues 1–22 (MGHPLLLPLLLLLHTCVPASWG). UPAR/Ly6 domains follow at residues 23–114 (LRCM…RSRY), 115–213 (LECI…PQNG), and 214–305 (HQCY…YRKG). Disulfide bonds link Cys-25-Cys-46, Cys-28-Cys-34, and Cys-39-Cys-67. An N-linked (GlcNAc...) asparagine glycan is attached at Asn-74. Cystine bridges form between Cys-93–Cys-98, Cys-117–Cys-144, Cys-120–Cys-127, Cys-137–Cys-169, Cys-175–Cys-192, Cys-193–Cys-198, Cys-216–Cys-244, Cys-219–Cys-227, Cys-237–Cys-263, Cys-269–Cys-287, and Cys-288–Cys-293. N-linked (GlcNAc...) asparagine glycans are attached at residues Asn-184, Asn-194, Asn-222, Asn-255, and Asn-284. The GPI-anchor amidated glycine moiety is linked to residue Gly-305. The propeptide at 306–335 (AAPQPGPAHLSLTITLLMTARLWGGTLLWT) is removed in mature form.

In terms of assembly, monomer. Interacts (via the UPAR/Ly6 domains) with SRPX2. Interacts with MRC2. Interacts with FAP (seprase); the interaction occurs at the cell surface of invadopodia membrane. Interacts with SORL1 (via N-terminal ectodomain); this interaction decreases PLAUR internalization. The ternary complex composed of PLAUR-PLAU-SERPINE1 also interacts with SORL1.

Its subcellular location is the cell membrane. The protein resides in the cell projection. It localises to the invadopodium membrane. In terms of biological role, acts as a receptor for urokinase plasminogen activator. Plays a role in localizing and promoting plasmin formation. Mediates the proteolysis-independent signal transduction activation effects of U-PA. It is subject to negative-feedback regulation by U-PA which cleaves it into an inactive form. This is Urokinase plasminogen activator surface receptor (PLAUR) from Macaca fascicularis (Crab-eating macaque).